We begin with the raw amino-acid sequence, 690 residues long: Potassium-transporting ATPase ATP-binding subunit (690 aa).

A run of 4 helical transmembrane segments spans residues 49 to 69, 72 to 92, 229 to 249, and 253 to 273; these read SPVM…CFVP, AVPT…VLFA, VALD…VVTL, and ALFA…VTLI. Asp317 (4-aspartylphosphate intermediate) is an active-site residue. ATP-binding positions include Asp354, Glu358, 385-392, and Lys403; that span reads FSAETRLS. Mg(2+)-binding residues include Asp526 and Asp530. 3 consecutive transmembrane segments (helical) span residues 596-616, 624-644, and 662-682; these read FAIL…LNVM, AILS…PLAL, and LLIY…AIDL.

The protein belongs to the cation transport ATPase (P-type) (TC 3.A.3) family. Type IA subfamily. The system is composed of three essential subunits: KdpA, KdpB and KdpC.

The protein resides in the cell inner membrane. The enzyme catalyses K(+)(out) + ATP + H2O = K(+)(in) + ADP + phosphate + H(+). Part of the high-affinity ATP-driven potassium transport (or Kdp) system, which catalyzes the hydrolysis of ATP coupled with the electrogenic transport of potassium into the cytoplasm. This subunit is responsible for energy coupling to the transport system and for the release of the potassium ions to the cytoplasm. This is Potassium-transporting ATPase ATP-binding subunit from Pseudomonas aeruginosa (strain ATCC 15692 / DSM 22644 / CIP 104116 / JCM 14847 / LMG 12228 / 1C / PRS 101 / PAO1).